Reading from the N-terminus, the 453-residue chain is Pup--protein ligase (453 aa).

Residue glutamate 9 coordinates Mg(2+). Arginine 53 is an ATP binding site. Tyrosine 55 contributes to the Mg(2+) binding site. Aspartate 57 serves as the catalytic Proton acceptor. Glutamate 63 lines the Mg(2+) pocket. Positions 66 and 420 each coordinate ATP.

Belongs to the Pup ligase/Pup deamidase family. Pup-conjugating enzyme subfamily.

The enzyme catalyses ATP + [prokaryotic ubiquitin-like protein]-L-glutamate + [protein]-L-lysine = ADP + phosphate + N(6)-([prokaryotic ubiquitin-like protein]-gamma-L-glutamyl)-[protein]-L-lysine.. Its pathway is protein degradation; proteasomal Pup-dependent pathway. It participates in protein modification; protein pupylation. In terms of biological role, catalyzes the covalent attachment of the prokaryotic ubiquitin-like protein modifier Pup to the proteasomal substrate proteins, thereby targeting them for proteasomal degradation. This tagging system is termed pupylation. The ligation reaction involves the side-chain carboxylate of the C-terminal glutamate of Pup and the side-chain amino group of a substrate lysine. The protein is Pup--protein ligase of Streptomyces coelicolor (strain ATCC BAA-471 / A3(2) / M145).